The sequence spans 247 residues: MNKLLRKVRKAFSLKADNKAETGIGTLIVFIAMVLVAAVAATVLVHTAGTLQQKATSTGSQTTQQVSTGIQVNSIYGLDSNKSVPTHGVIEWLAIQISITAGSSPINLANVTISLTYHGVSASLTYVGLENIGNATVTNDVYGFNSAVGGTNNVFNSSYFKTINGASNGSKHFAILVLSDPTNSMTAQYPVISYEDQVDLLVNVSAVFGGITEGQAVSGEVQAPVGSPGVIQFTAPESFVSDVIQLQ.

Residues 1 to 20 constitute a propeptide that is removed on maturation; it reads MNKLLRKVRKAFSLKADNKA.

It belongs to the archaeal flagellin family. Glycosylated.

The protein localises to the archaeal flagellum. Flagellin is the subunit protein which polymerizes to form the filaments of archaeal flagella. This is Flagellin B1 from Thermoplasma volcanium (strain ATCC 51530 / DSM 4299 / JCM 9571 / NBRC 15438 / GSS1).